Reading from the N-terminus, the 327-residue chain is Ribosomal RNA large subunit methyltransferase F (327 aa).

The disordered stretch occupies residues 1–31 (MTHPVTPKNTTRPTPANKPAASTLHPRNPHQ).

The protein belongs to the methyltransferase superfamily. METTL16/RlmF family.

The protein resides in the cytoplasm. The enzyme catalyses adenosine(1618) in 23S rRNA + S-adenosyl-L-methionine = N(6)-methyladenosine(1618) in 23S rRNA + S-adenosyl-L-homocysteine + H(+). In terms of biological role, specifically methylates the adenine in position 1618 of 23S rRNA. This Psychrobacter sp. (strain PRwf-1) protein is Ribosomal RNA large subunit methyltransferase F.